Here is a 387-residue protein sequence, read N- to C-terminus: Protein RecA, chromosomal (387 aa).

G80–T87 provides a ligand contact to ATP. Residues E352 to D387 are disordered. The span at T378–D387 shows a compositional bias: acidic residues.

This sequence belongs to the RecA family.

It localises to the cytoplasm. Its function is as follows. Can catalyze the hydrolysis of ATP in the presence of single-stranded DNA, the ATP-dependent uptake of single-stranded DNA by duplex DNA, and the ATP-dependent hybridization of homologous single-stranded DNAs. It interacts with LexA causing its activation and leading to its autocatalytic cleavage. In Lactococcus lactis subsp. lactis (strain IL1403) (Streptococcus lactis), this protein is Protein RecA, chromosomal.